A 527-amino-acid polypeptide reads, in one-letter code: Peptide chain release factor 3 (527 aa).

A tr-type G domain is found at 9-277 (AKRRTFAIIS…AVVDWAPRPL (269 aa)). Residues 18–25 (SHPDAGKT), 86–90 (DTPGH), and 140–143 (NKLD) each bind GTP.

It belongs to the TRAFAC class translation factor GTPase superfamily. Classic translation factor GTPase family. PrfC subfamily.

It localises to the cytoplasm. In terms of biological role, increases the formation of ribosomal termination complexes and stimulates activities of RF-1 and RF-2. It binds guanine nucleotides and has strong preference for UGA stop codons. It may interact directly with the ribosome. The stimulation of RF-1 and RF-2 is significantly reduced by GTP and GDP, but not by GMP. In Pseudomonas putida (strain ATCC 47054 / DSM 6125 / CFBP 8728 / NCIMB 11950 / KT2440), this protein is Peptide chain release factor 3.